The chain runs to 154 residues: Deoxyuridine 5'-triphosphate nucleotidohydrolase (154 aa).

Substrate contacts are provided by residues 64–66, Asn-77, 81–83, and Lys-91; these read RSG and TID.

This sequence belongs to the dUTPase family. In terms of assembly, homotrimer. Requires Mg(2+) as cofactor.

The enzyme catalyses dUTP + H2O = dUMP + diphosphate + H(+). It participates in pyrimidine metabolism; dUMP biosynthesis; dUMP from dCTP (dUTP route): step 2/2. In terms of biological role, this enzyme is involved in nucleotide metabolism: it produces dUMP, the immediate precursor of thymidine nucleotides and it decreases the intracellular concentration of dUTP so that uracil cannot be incorporated into DNA. The chain is Deoxyuridine 5'-triphosphate nucleotidohydrolase from Mycobacterium bovis (strain BCG / Pasteur 1173P2).